Reading from the N-terminus, the 612-residue chain is Glutamine--fructose-6-phosphate aminotransferase [isomerizing] (612 aa).

The active-site Nucleophile; for GATase activity is the cysteine 2. The Glutamine amidotransferase type-2 domain occupies 2–221 (CGIVGIVSQR…NGDIAEITNS (220 aa)). SIS domains are found at residues 289–429 (FNKT…IRKI) and 461–602 (LVKN…VDHP). Lysine 607 (for Fru-6P isomerization activity) is an active-site residue.

As to quaternary structure, homodimer.

The protein localises to the cytoplasm. The catalysed reaction is D-fructose 6-phosphate + L-glutamine = D-glucosamine 6-phosphate + L-glutamate. Functionally, catalyzes the first step in hexosamine metabolism, converting fructose-6P into glucosamine-6P using glutamine as a nitrogen source. This Wigglesworthia glossinidia brevipalpis protein is Glutamine--fructose-6-phosphate aminotransferase [isomerizing].